A 143-amino-acid chain; its full sequence is Nucleoside diphosphate kinase (143 aa).

The ATP site is built by lysine 11, phenylalanine 59, arginine 87, threonine 93, arginine 104, and asparagine 114. Histidine 117 (pros-phosphohistidine intermediate) is an active-site residue.

This sequence belongs to the NDK family. Homotetramer. Requires Mg(2+) as cofactor.

The protein localises to the cytoplasm. It catalyses the reaction a 2'-deoxyribonucleoside 5'-diphosphate + ATP = a 2'-deoxyribonucleoside 5'-triphosphate + ADP. It carries out the reaction a ribonucleoside 5'-diphosphate + ATP = a ribonucleoside 5'-triphosphate + ADP. In terms of biological role, major role in the synthesis of nucleoside triphosphates other than ATP. The ATP gamma phosphate is transferred to the NDP beta phosphate via a ping-pong mechanism, using a phosphorylated active-site intermediate. This is Nucleoside diphosphate kinase from Clostridium perfringens (strain ATCC 13124 / DSM 756 / JCM 1290 / NCIMB 6125 / NCTC 8237 / Type A).